The primary structure comprises 309 residues: uncharacterized protein (309 aa).

3 Solcar repeats span residues 6–83 (SDLY…LCHS), 97–211 (LTGY…FKRL), and 216–302 (NDKA…VSLL). Helical transmembrane passes span 12–32 (ITAG…FEYL), 47–67 (IILP…VAAF), 100–120 (YNLL…IIPF), 184–204 (VQGT…QFTA), 222–242 (VITG…IDVV), and 285–305 (VGIS…LLGF).

The protein belongs to the mitochondrial carrier (TC 2.A.29) family.

Its subcellular location is the mitochondrion inner membrane. This is an uncharacterized protein from Saccharomyces cerevisiae (strain ATCC 204508 / S288c) (Baker's yeast).